Here is a 216-residue protein sequence, read N- to C-terminus: Protein ORM2 (216 aa).

The tract at residues 1–50 is disordered; sequence MIDRTKNESPAFEESPLTPNVSNLKPFPSQSNKISTPVTDHRRRRSSSVI. The Cytoplasmic portion of the chain corresponds to 1–78; it reads MIDRTKNESP…NMNATWVDQR (78 aa). 2 positions are modified to phosphoserine: Ser-9 and Ser-15. The segment covering 17-38 has biased composition (polar residues); the sequence is LTPNVSNLKPFPSQSNKISTPV. Thr-18 bears the Phosphothreonine mark. Phosphoserine is present on residues Ser-22, Ser-29, and Ser-51. The helical transmembrane segment at 79-99 threads the bilayer; it reads GAWLIHIVVIVLLRLFYSLFG. At 100–103 the chain is on the extracellular side; that stretch reads STPK. The helical transmembrane segment at 104–124 threads the bilayer; that stretch reads WTWTLTNMTYIIGFYIMFHLV. Residues 125–148 lie on the Cytoplasmic side of the membrane; it reads KGTPFDFNGGAYDNLTMWEQINDE. A helical membrane pass occupies residues 149-169; the sequence is TLYTPTRKFLLIVPIVLFLIS. The Extracellular segment spans residues 170 to 177; it reads NQYYRNDM. A helical membrane pass occupies residues 178-198; sequence TLFLSNLAVTVLIGVVPKLGI. Residues 199–216 lie on the Cytoplasmic side of the membrane; sequence THRLRISIPGITGRAQIS.

The protein belongs to the ORM family. Component of the SPOTS complex, at least composed of LCB1/2 (LCB1 and/or LCB2), ORM1/2 (ORM1 and/or ORM2), SAC1 and TSC3. In terms of processing, phosphorylated in case of disruption of sphingolipid synthesis. Phosphorylation regulates the inhibitory activity of serine palmitoyltransferases (LCB1 and LCB2).

Its subcellular location is the endoplasmic reticulum membrane. Component of the SPOTS complex that acts as a negative regulator of sphingolipid synthesis. Acts by inhibiting serine palmitoyltransferases (LCB1 and LCB2) activity. Along with ORM1, plays a role in the phosphorylation of LAC1 and YPK1, the distribution of actin patches between mother and daughter cells, and in endocytosis. The chain is Protein ORM2 (ORM2) from Saccharomyces cerevisiae (strain ATCC 204508 / S288c) (Baker's yeast).